The primary structure comprises 347 residues: Putative adhesin P1-like protein MPN_099 (347 aa).

Positions 282–300 are enriched in polar residues; that stretch reads FGTDHSTQPQPQSLKTTTP. The interval 282–302 is disordered; it reads FGTDHSTQPQPQSLKTTTPVF.

It belongs to the adhesin P1 family.

This chain is Putative adhesin P1-like protein MPN_099, found in Mycoplasma pneumoniae (strain ATCC 29342 / M129 / Subtype 1) (Mycoplasmoides pneumoniae).